A 179-amino-acid polypeptide reads, in one-letter code: Inorganic pyrophosphatase (179 aa).

The substrate site is built by Lys30, Arg44, and Tyr56. Mg(2+) contacts are provided by Asp66, Asp71, and Asp103. Substrate is bound at residue Tyr142.

Belongs to the PPase family. Homohexamer. Requires Mg(2+) as cofactor.

Its subcellular location is the cytoplasm. The enzyme catalyses diphosphate + H2O = 2 phosphate + H(+). Its function is as follows. Catalyzes the hydrolysis of inorganic pyrophosphate (PPi) forming two phosphate ions. This Rhodospirillum rubrum (strain ATCC 11170 / ATH 1.1.1 / DSM 467 / LMG 4362 / NCIMB 8255 / S1) protein is Inorganic pyrophosphatase.